We begin with the raw amino-acid sequence, 387 residues long: Phosphoglycerate kinase (387 aa).

Residues 21-23 (DLN), arginine 36, 59-62 (HLGR), arginine 113, and arginine 146 contribute to the substrate site. ATP is bound by residues lysine 197, glutamate 314, and 340–343 (GGDT).

The protein belongs to the phosphoglycerate kinase family. In terms of assembly, monomer.

The protein localises to the cytoplasm. The enzyme catalyses (2R)-3-phosphoglycerate + ATP = (2R)-3-phospho-glyceroyl phosphate + ADP. Its pathway is carbohydrate degradation; glycolysis; pyruvate from D-glyceraldehyde 3-phosphate: step 2/5. In Pseudomonas aeruginosa (strain ATCC 15692 / DSM 22644 / CIP 104116 / JCM 14847 / LMG 12228 / 1C / PRS 101 / PAO1), this protein is Phosphoglycerate kinase.